A 424-amino-acid chain; its full sequence is UPF0229 protein PFL_5654 (424 aa).

The disordered stretch occupies residues 85–108 (GEHIARPQGGGGGGGGRGKAGNSG). Over residues 92-108 (QGGGGGGGGRGKAGNSG) the composition is skewed to gly residues.

It belongs to the UPF0229 family.

This Pseudomonas fluorescens (strain ATCC BAA-477 / NRRL B-23932 / Pf-5) protein is UPF0229 protein PFL_5654.